The sequence spans 564 residues: Centrosomal protein kizuna (564 aa).

Positions 1–21 (MSEAGRAAAGPCPEVSPSRSQ) are disordered. Residues 28–50 (RCLRDSETRRLELERKLMEYKSS) are a coiled coil. Disordered stretches follow at residues 178 to 201 (QPAA…PTQA), 304 to 345 (TGPQ…EDEP), 442 to 465 (ECGD…PNDS), 487 to 519 (IGNN…RPEF), and 531 to 564 (AFWG…DFYD). Over residues 313–324 (QQAASQDSSSSS) the composition is skewed to low complexity. A compositionally biased stretch (polar residues) spans 447-463 (SSVQSNESSYSLPSIPN). The span at 493–519 (EAKESQEMCSERSSSSERSGDLSRPEF) shows a compositional bias: basic and acidic residues.

The protein belongs to the kizuna family.

It localises to the cytoplasm. It is found in the cytoskeleton. The protein localises to the microtubule organizing center. Its subcellular location is the centrosome. The protein resides in the cilium basal body. Centrosomal protein required for establishing a robust mitotic centrosome architecture that can endure the forces that converge on the centrosomes during spindle formation. Required for stabilizing the expanded pericentriolar material around the centriole. The polypeptide is Centrosomal protein kizuna (KIZ) (Gallus gallus (Chicken)).